A 344-amino-acid polypeptide reads, in one-letter code: DnaJ homolog subfamily C member 25 (344 aa).

A helical membrane pass occupies residues 5–25 (WVLLVALSVLFLSGRAGALTE). One can recognise a J domain in the interval 33–108 (VCYDVLGVSR…ETRKDYDYML (76 aa)). 2 helical membrane-spanning segments follow: residues 134–154 (IVIL…WWSS) and 228–248 (ILLF…SWYV).

The protein belongs to the DNAJC25 family.

Its subcellular location is the membrane. The chain is DnaJ homolog subfamily C member 25 (dnajc25) from Xenopus laevis (African clawed frog).